The following is a 304-amino-acid chain: Acetaldehyde dehydrogenase 4 (304 aa).

Cys131 (acyl-thioester intermediate) is an active-site residue. Residues 162-170 (SAGPGTRKN) and Asn273 each bind NAD(+).

The protein belongs to the acetaldehyde dehydrogenase family.

It catalyses the reaction acetaldehyde + NAD(+) + CoA = acetyl-CoA + NADH + H(+). The polypeptide is Acetaldehyde dehydrogenase 4 (Dechloromonas aromatica (strain RCB)).